The primary structure comprises 391 residues: Phosphoglycerate kinase (391 aa).

Substrate-binding positions include 21 to 23 (DLN), R36, 59 to 62 (HLGR), R113, and R146. ATP-binding positions include K197, E319, and 345–348 (GGDT).

Belongs to the phosphoglycerate kinase family. As to quaternary structure, monomer.

Its subcellular location is the cytoplasm. It carries out the reaction (2R)-3-phosphoglycerate + ATP = (2R)-3-phospho-glyceroyl phosphate + ADP. It functions in the pathway carbohydrate degradation; glycolysis; pyruvate from D-glyceraldehyde 3-phosphate: step 2/5. The protein is Phosphoglycerate kinase of Shewanella sp. (strain ANA-3).